Consider the following 2385-residue polypeptide: Neuron navigator 3 (2385 aa).

Positions 17–38 (SKPVHTALPIPNLGTTGSQHCS) are disordered. Polar residues predominate over residues 29 to 38 (LGTTGSQHCS). The Calponin-homology (CH) domain maps to 77 to 184 (KEDSKIYTDW…LFFSLSRYKQ (108 aa)). Residues 203–625 (VTHASPPSEA…LPQQQQHSHP (423 aa)) are disordered. 3 stretches are compositionally biased toward polar residues: residues 210–243 (SEASQAKTQQDMQSSLAARYATQSNHSGIATSQK), 258–279 (GSSSKVQGASNLNRRSQSFNSI), and 297–316 (KGPQSSSGVNGNVQPPSTAG). Over residues 318 to 329 (PPASAIPSPSAS) the composition is skewed to low complexity. The segment covering 335 to 352 (KSMNVKHSATSTMLTVKQ) has biased composition (polar residues). 2 stretches are compositionally biased toward low complexity: residues 353-363 (SSTATSPTPSS) and 427-439 (NSGLNSGGSTNSS). The segment covering 465 to 491 (PKEKEEKNRDKNKVCTEKPVKEEKDQV) has biased composition (basic and acidic residues). Low complexity predominate over residues 521–535 (IPSSSGIPKPGSKVP). Polar residues-rich tracts occupy residues 537-548 (VKQTISPGSTAS), 557-567 (TKGSPSQSLSK), and 591-625 (ASPSGSCTMTVAQSSGQSTGNGAVQLPQQQQHSHP). The stretch at 679–707 (ETRRMRTVKNIADLRQNLEETMSSLRGTQ) forms a coiled coil. Disordered regions lie at residues 877–1312 (ADSW…SPLF), 1351–1370 (SSSSAGSKDTPSYQSMTSLH), 1410–1468 (LSES…SAMS), 1650–1778 (GALN…KRQN), 1850–1881 (DRLKAETGNTAKPTRPPSESSSSTSSSSSRQS), and 2360–2385 (SSTQSCDSESTSHHEDILDSSLESTL). The segment covering 882–895 (DSSSVSSGLSDTLD) has biased composition (low complexity). The span at 896–925 (NISTDDLNTTSSVSSYSNITVPSRKNTQLR) shows a compositional bias: polar residues. The segment covering 942-959 (EELKKPEEDFDSHGDAGG) has biased composition (basic and acidic residues). The segment covering 979–988 (ASLSVSQTGS) has biased composition (polar residues). The segment covering 1014-1026 (GKTDDAKASEKGK) has biased composition (basic and acidic residues). 2 stretches are compositionally biased toward low complexity: residues 1074 to 1092 (GSSAMITSSGATITSGSAT) and 1157 to 1170 (SSTSSIDSNVSSKS). Positions 1187-1196 (GRSSPVTVNQ) are enriched in polar residues. Low complexity-rich tracts occupy residues 1206-1226 (VSDSESVSLSGSPKSSPTSAS) and 1253-1263 (GAKAGGKSASA). Residues 1264–1289 (PNTEGVKSSSVMPSPSTTLARQGSLE) are compositionally biased toward polar residues. Residues 1296–1305 (GSMGSAGGLS) show a composition bias toward gly residues. The span at 1436 to 1445 (NQEEGKEWLR) shows a compositional bias: basic and acidic residues. Residues 1446-1462 (SHSTGGLQDTGNQSPLV) are compositionally biased toward polar residues. 2 positions are modified to phosphoserine: Ser-1459 and Ser-1463. The stretch at 1562–1653 (AEEKAHSEQI…AQAAIQGALN (92 aa)) forms a coiled coil. The segment covering 1672–1689 (SVSSINSATSHSSIGSGN) has biased composition (low complexity). Polar residues predominate over residues 1701 to 1714 (WVNSRGSELRSSFK). A coiled-coil region spans residues 1794–1861 (EAEAEIILQL…LKAETGNTAK (68 aa)). Low complexity predominate over residues 1867–1881 (SESSSSTSSSSSRQS).

The protein belongs to the Nav/unc-53 family. In terms of tissue distribution, highly expressed in brain. Expressed at low levels in heart and placenta. Present in activated T-cells but not in resting T-cells (at protein level). Down-regulated in primary neuroblastoma.

The protein resides in the nucleus outer membrane. Functionally, plays a role in cell migration. May be involved in neuron regeneration. May regulate IL2 production by T-cells. This chain is Neuron navigator 3 (NAV3), found in Homo sapiens (Human).